We begin with the raw amino-acid sequence, 236 residues long: 3-deoxy-D-manno-octulosonic acid kinase (236 aa).

The active site involves Asp-167.

It belongs to the protein kinase superfamily. KdkA/RfaP family.

Its subcellular location is the cell inner membrane. The enzyme catalyses an alpha-Kdo-(2-&gt;6)-lipid IVA + ATP = a 4-O-phospho-alpha-Kdo-(2-&gt;6)-lipid IVA + ADP + H(+). It participates in bacterial outer membrane biogenesis; LPS core biosynthesis. Catalyzes the ATP-dependent phosphorylation of the 3-deoxy-D-manno-octulosonic acid (Kdo) residue in Kdo-lipid IV(A) at the 4-OH position. This Vibrio vulnificus (strain CMCP6) protein is 3-deoxy-D-manno-octulosonic acid kinase.